Reading from the N-terminus, the 193-residue chain is Ubiquitin-conjugating enzyme E2 E1 (193 aa).

The disordered stretch occupies residues 1-45 (MSDDDSRASTSSSSSSSSNQQTEKETNTPKKKESKVSMSKNSKLL). Serine 2 is modified (N-acetylserine). Over residues 8–18 (ASTSSSSSSSS) the composition is skewed to low complexity. A compositionally biased stretch (basic and acidic residues) spans 22 to 35 (TEKETNTPKKKESK). The segment covering 36–45 (VSMSKNSKLL) has biased composition (polar residues). Residues 47–193 (TSAKRIQKEL…ARQWTKRYAT (147 aa)) form the UBC core domain. Residue cysteine 131 is the Glycyl thioester intermediate of the active site. Residue lysine 136 forms a Glycyl lysine isopeptide (Lys-Gly) (interchain with G-Cter in ISG15) linkage.

The protein belongs to the ubiquitin-conjugating enzyme family. In terms of assembly, interacts with RNF14. Post-translationally, ISGylation suppresses ubiquitin E2 enzyme activity. In terms of processing, autoubiquitinated in vitro.

Its subcellular location is the nucleus. The catalysed reaction is S-ubiquitinyl-[E1 ubiquitin-activating enzyme]-L-cysteine + [E2 ubiquitin-conjugating enzyme]-L-cysteine = [E1 ubiquitin-activating enzyme]-L-cysteine + S-ubiquitinyl-[E2 ubiquitin-conjugating enzyme]-L-cysteine.. The enzyme catalyses S-ubiquitinyl-[E1 ubiquitin-activating enzyme]-L-cysteine + [acceptor protein]-L-lysine = [E1 ubiquitin-activating enzyme]-L-cysteine + N(6)-monoubiquitinyl-[acceptor protein]-L-lysine.. It functions in the pathway protein modification; protein ubiquitination. Its function is as follows. Accepts ubiquitin from the E1 complex and catalyzes its covalent attachment to other proteins. Catalyzes the covalent attachment of ISG15 to other proteins. Mediates the selective degradation of short-lived and abnormal proteins. In vitro also catalyzes 'Lys-48'-linked polyubiquitination. Catalyzes monoubiquitination of other proteins in both an E3-dependent and E3-independent manner. This chain is Ubiquitin-conjugating enzyme E2 E1, found in Homo sapiens (Human).